A 944-amino-acid chain; its full sequence is Valine--tRNA ligase (944 aa).

Positions 43–53 (PNVTGTLHMGH) match the 'HIGH' region motif. A 'KMSKS' region motif is present at residues 550–554 (KMSKS). Lysine 553 serves as a coordination point for ATP. Residues 878-944 (LVDMDAERTR…TGLREQRAKL (67 aa)) adopt a coiled-coil conformation.

Belongs to the class-I aminoacyl-tRNA synthetase family. ValS type 1 subfamily. As to quaternary structure, monomer.

It localises to the cytoplasm. It catalyses the reaction tRNA(Val) + L-valine + ATP = L-valyl-tRNA(Val) + AMP + diphosphate. Functionally, catalyzes the attachment of valine to tRNA(Val). As ValRS can inadvertently accommodate and process structurally similar amino acids such as threonine, to avoid such errors, it has a 'posttransfer' editing activity that hydrolyzes mischarged Thr-tRNA(Val) in a tRNA-dependent manner. This chain is Valine--tRNA ligase, found in Xanthomonas campestris pv. campestris (strain 8004).